The following is a 239-amino-acid chain: Exosome complex component Rrp41 (239 aa).

Residues 1–21 (MEERPERLISEDGLRLDGRKP) are disordered.

This sequence belongs to the RNase PH family. Rrp41 subfamily. In terms of assembly, component of the archaeal exosome complex. Forms a hexameric ring-like arrangement composed of 3 Rrp41-Rrp42 heterodimers. The hexameric ring associates with a trimer of Rrp4 and/or Csl4 subunits.

Its subcellular location is the cytoplasm. Its function is as follows. Catalytic component of the exosome, which is a complex involved in RNA degradation. Has 3'-&gt;5' exoribonuclease activity. Can also synthesize heteromeric RNA-tails. This chain is Exosome complex component Rrp41, found in Methanopyrus kandleri (strain AV19 / DSM 6324 / JCM 9639 / NBRC 100938).